Consider the following 333-residue polypeptide: 4-hydroxythreonine-4-phosphate dehydrogenase (333 aa).

Histidine 136 and threonine 137 together coordinate substrate. 3 residues coordinate a divalent metal cation: histidine 166, histidine 211, and histidine 266. 3 residues coordinate substrate: lysine 274, asparagine 283, and arginine 292.

Belongs to the PdxA family. In terms of assembly, homodimer. Zn(2+) serves as cofactor. It depends on Mg(2+) as a cofactor. Requires Co(2+) as cofactor.

The protein localises to the cytoplasm. It carries out the reaction 4-(phosphooxy)-L-threonine + NAD(+) = 3-amino-2-oxopropyl phosphate + CO2 + NADH. Its pathway is cofactor biosynthesis; pyridoxine 5'-phosphate biosynthesis; pyridoxine 5'-phosphate from D-erythrose 4-phosphate: step 4/5. Functionally, catalyzes the NAD(P)-dependent oxidation of 4-(phosphooxy)-L-threonine (HTP) into 2-amino-3-oxo-4-(phosphooxy)butyric acid which spontaneously decarboxylates to form 3-amino-2-oxopropyl phosphate (AHAP). This is 4-hydroxythreonine-4-phosphate dehydrogenase from Acidithiobacillus ferrooxidans (strain ATCC 23270 / DSM 14882 / CIP 104768 / NCIMB 8455) (Ferrobacillus ferrooxidans (strain ATCC 23270)).